The following is a 225-amino-acid chain: 3-dehydroquinate dehydratase (225 aa).

Residues serine 6, glutamate 30–arginine 32, and arginine 62 contribute to the 3-dehydroquinate site. Histidine 118 (proton donor/acceptor) is an active-site residue. Residue lysine 143 is the Schiff-base intermediate with substrate of the active site. 3-dehydroquinate-binding residues include arginine 186, serine 205, and glutamine 209.

It belongs to the type-I 3-dehydroquinase family. In terms of assembly, homodimer.

It carries out the reaction 3-dehydroquinate = 3-dehydroshikimate + H2O. The protein operates within metabolic intermediate biosynthesis; chorismate biosynthesis; chorismate from D-erythrose 4-phosphate and phosphoenolpyruvate: step 3/7. Its function is as follows. Involved in the third step of the chorismate pathway, which leads to the biosynthesis of aromatic amino acids. Catalyzes the cis-dehydration of 3-dehydroquinate (DHQ) and introduces the first double bond of the aromatic ring to yield 3-dehydroshikimate. In Streptococcus pneumoniae (strain P1031), this protein is 3-dehydroquinate dehydratase.